The sequence spans 300 residues: Transacylase cctO (300 aa).

A helical membrane pass occupies residues 52-72 (IVYVSLTFFVVSIGLNFILAI). Short sequence motifs (HXXHC) lie at residues 185–189 (HQLGC) and 225–229 (HVDQC). N-linked (GlcNAc...) asparagine glycosylation is present at N270.

Belongs to the ustYa family.

The protein resides in the membrane. It functions in the pathway mycotoxin biosynthesis. Its function is as follows. Transacylase; part of the gene cluster that mediates the biosynthesis of the mycotoxin cyclochlorotine, a hepatotoxic and carcinogenic cyclic chlorinated pentapeptide. Within the pathway, cctO catalyzes the intramolecular O,N-transacylation from isocyclochlorotine to cyclochlorotine. The NRPS cctN initially catalyzes the condensation of L-serine (Ser), Pro, L-2-aminobutyrate (2Abu), Ser, and beta-Phe in this order to produce isocyclotine. After the dichlorination of Pro2 catalyzed by cctP2 to produce isocyclochlorotine, the cctO-mediated transacylation of isocyclochlorotine can furnish cyclochlorotine. The subsequent hydroxylation of cyclochlorotine by cctR yields hydroxycyclochlorotine as the final product. CctP1 probably acts as a phenylalanine aminomutase and provides the uncommon building block beta-Phe. Furthermore, 2Abu can be synthesized from threonine by one of the threonine dehydratases and transaminases localized outside of the cluster. The functions of the remaining proteins encoded by the cluster, cctM and cctT, have not been identified yet. This is Transacylase cctO from Talaromyces islandicus (Penicillium islandicum).